A 366-amino-acid polypeptide reads, in one-letter code: Protein RecA (366 aa).

An ATP-binding site is contributed by 81–88 (GPESSGKT).

This sequence belongs to the RecA family.

It localises to the cytoplasm. Can catalyze the hydrolysis of ATP in the presence of single-stranded DNA, the ATP-dependent uptake of single-stranded DNA by duplex DNA, and the ATP-dependent hybridization of homologous single-stranded DNAs. It interacts with LexA causing its activation and leading to its autocatalytic cleavage. The sequence is that of Protein RecA from Leptospira interrogans serogroup Icterohaemorrhagiae serovar copenhageni (strain Fiocruz L1-130).